Consider the following 404-residue polypeptide: LL-diaminopimelate aminotransferase (404 aa).

Residues Tyr15 and Gly42 each coordinate substrate. Pyridoxal 5'-phosphate contacts are provided by residues Tyr72, 108–109 (AK), Tyr132, Asn188, Tyr219, and 247–249 (SFS). Positions 109, 132, and 188 each coordinate substrate. N6-(pyridoxal phosphate)lysine is present on Lys250. 2 residues coordinate pyridoxal 5'-phosphate: Arg258 and Asn288. Substrate-binding residues include Asn288 and Arg384.

This sequence belongs to the class-I pyridoxal-phosphate-dependent aminotransferase family. LL-diaminopimelate aminotransferase subfamily. Homodimer. Requires pyridoxal 5'-phosphate as cofactor.

The catalysed reaction is (2S,6S)-2,6-diaminopimelate + 2-oxoglutarate = (S)-2,3,4,5-tetrahydrodipicolinate + L-glutamate + H2O + H(+). The protein operates within amino-acid biosynthesis; L-lysine biosynthesis via DAP pathway; LL-2,6-diaminopimelate from (S)-tetrahydrodipicolinate (aminotransferase route): step 1/1. Functionally, involved in the synthesis of meso-diaminopimelate (m-DAP or DL-DAP), required for both lysine and peptidoglycan biosynthesis. Catalyzes the direct conversion of tetrahydrodipicolinate to LL-diaminopimelate. The polypeptide is LL-diaminopimelate aminotransferase (Agathobacter rectalis (strain ATCC 33656 / DSM 3377 / JCM 17463 / KCTC 5835 / VPI 0990) (Eubacterium rectale)).